Reading from the N-terminus, the 266-residue chain is Putative carbamate hydrolase RutD (266 aa).

Belongs to the AB hydrolase superfamily. Hydrolase RutD family.

The enzyme catalyses carbamate + 2 H(+) = NH4(+) + CO2. In terms of biological role, involved in pyrimidine catabolism. May facilitate the hydrolysis of carbamate, a reaction that can also occur spontaneously. This is Putative carbamate hydrolase RutD from Escherichia coli O103:H2 (strain 12009 / EHEC).